A 502-amino-acid chain; its full sequence is Protein krueppel (502 aa).

Disordered regions lie at residues 115–164 and 178–202; these read PPQG…KLSV and DMYHTSGGPISPPSSGSSPNSTHDG. 2 stretches are compositionally biased toward low complexity: residues 119 to 136 and 183 to 198; these read THLHSPPASPHSPLSTPL and SGGPISPPSSGSSPNS. 5 consecutive C2H2-type zinc fingers follow at residues 222–244, 250–272, 278–300, 306–328, and 334–354; these read FTCKICSRSFGYKHVLQNHERTH, FECPECHKRFTRDHHLKTHMRLH, YHCSHCDRQFVQVANLRRHLRVH, YTCEICDGKFSDSNQLKSHMLVH, and FECERCHMKFRRRHHLMNHKC. Disordered stretches follow at residues 399-427 and 445-502; these read NESVDMEKATPEDDGPLDLSEDGASSVDG and RLPP…HQQH. The segment covering 410–419 has biased composition (acidic residues); sequence EDDGPLDLSE. Serine 468, serine 471, and serine 477 each carry phosphoserine. Positions 482–491 are enriched in acidic residues; sequence DDIDLYDLDD.

It belongs to the krueppel C2H2-type zinc-finger protein family.

It is found in the nucleus. Krueppel is a gap class segmentation protein. It is involved in the segmentation of the embryo and in the differentiation of the Malpighian tubules. The chain is Protein krueppel (Kr) from Drosophila melanogaster (Fruit fly).